A 626-amino-acid chain; its full sequence is Nuclear RNA export factor 1 (626 aa).

Basic and acidic residues predominate over residues 1-16 (MADEGKSYSEHDDERV). The tract at residues 1 to 85 (MADEGKSYSE…TTRPNRRGDA (85 aa)) is disordered. Alanine 2 is subject to N-acetylalanine. A minor non-specific RNA-binding region spans residues 2-60 (ADEGKSYSEHDDERVNFPQRKKKGRGPFRWKYGEGNRRSGRGGSGIRSSRLEEDDGDVA). The segment at 2–118 (ADEGKSYSEH…GTSQDGTSKN (117 aa)) is RNA-binding (RBD). Residues 2–198 (ADEGKSYSEH…IIINPSAPPH (197 aa)) form an interaction with ALYREF/THOC4 and LUZP4 region. Serine 9 carries the post-translational modification Phosphoserine. A compositionally biased stretch (basic residues) spans 20–29 (QRKKKGRGPF). At arginine 42 the chain carries Asymmetric dimethylarginine; alternate. An Omega-N-methylarginine; alternate modification is found at arginine 42. The segment at 61–118 (MSDAQDGPRVRYNPYTTRPNRRGDAWHDRDRIHVTVRRDRAPPERGGAGTSQDGTSKN) is major non-specific RNA-binding. The RNA binding stretch occupies residues 61 to 118 (MSDAQDGPRVRYNPYTTRPNRRGDAWHDRDRIHVTVRRDRAPPERGGAGTSQDGTSKN). The Nuclear localization signal signature appears at 67-100 (GPRVRYNPYTTRPNRRGDAWHDRDRIHVTVRRDR). A Nuclear export signal motif is present at residues 83–110 (GDAWHDRDRIHVTVRRDRAPPERGGAGT). The RRM domain maps to 119-198 (WFKITIPYGR…IIINPSAPPH (80 aa)). Residue tyrosine 126 is modified to 3'-nitrotyrosine. 4 LRR repeats span residues 266-291 (ELLS…QKVP), 292-315 (NLKI…IKGL), 316-350 (KLEE…AIRE), and 351-378 (RFPK…TTLP). One can recognise an NTF2 domain in the interval 393–543 (LVLHFLQQYY…LCIVNDELFV (151 aa)). A TAP-C domain is found at 572–626 (PEQQEMLQAFSTQSGMNLEWSQKCLQDNNWDYTRSAQAFTHLKAKGEIPEVAFMK).

The protein belongs to the NXF family. As to quaternary structure, heterodimer (via NTF2 domain) with NXT1. The formation of NXF1-NXT1 heterodimers is required for the NXF1-mediated nuclear mRNA export. Forms a complex with RANBP2/NUP358, NXT1 and RANGAP1. Associates with the exon junction complex (EJC) and with the transcription/export (TREX) complex. Found in a mRNA complex with UPF3A and UPF3B. Found in a post-splicing complex with RBM8A, UPF1, UPF2, UPF3A, UPF3B and RNPS1. Interacts (via N-terminus) with DHX9 (via N-terminus); this interaction is direct and negatively regulates NXF1-mediated nuclear export of constitutive transport element (CTE)-containing cellular mRNAs. Interacts with ALYREF/THOC4. Interacts with FYTTD1/UIF. Interacts with EIF4A3. Interacts with NUPL2. Interacts with THOC5. Interacts with CHTOP. Interacts with FRG1 (via N-terminus). Interacts with LUZP4. Interacts with FMR1; the interaction occurs in a mRNA-dependent and polyribosomes-independent manner in the nucleus. Interacts with CPSF6 (via N-terminus); this interaction is direct. Interacts with RBM15. Interacts with RBM15B. Interacts with MCM3AP; this interaction is not mediated by RNA.

It localises to the nucleus. It is found in the nucleoplasm. The protein localises to the nucleus speckle. Its subcellular location is the cytoplasm. In terms of biological role, involved in the nuclear export of mRNA species bearing retroviral constitutive transport elements (CTE) and in the export of mRNA from the nucleus to the cytoplasm (TAP/NFX1 pathway). The NXF1-NXT1 heterodimer is involved in the export of HSP70 mRNA in conjunction with ALYREF/THOC4 and THOC5 components of the TREX complex. ALYREF/THOC4-bound mRNA is thought to be transferred to the NXF1-NXT1 heterodimer for export. Also involved in nuclear export of m6A-containing mRNAs: interaction between SRSF3 and YTHDC1 facilitates m6A-containing mRNA-binding to both SRSF3 and NXF1, promoting mRNA nuclear export. The protein is Nuclear RNA export factor 1 (NXF1) of Pongo abelii (Sumatran orangutan).